A 632-amino-acid polypeptide reads, in one-letter code: RNA-binding post-transcriptional regulator csx1 (632 aa).

Ser-42 and Ser-54 each carry phosphoserine; by MAPK sty1. Ser-67 and Ser-69 each carry phosphoserine. 2 RRM domains span residues 85-167 and 182-261; these read DTLW…WATG and FSIF…VASP. Ser-291 carries the phosphoserine; by MAPK sty1 modification. Positions 297 to 369 constitute an RRM 3 domain; the sequence is TTVFVGGLAS…SHIRLAWGHN (73 aa). A Phosphoserine; by MAPK sty1 modification is found at Ser-455. Positions 456–476 are disordered; sequence PPPLSRSASISPTLSGSGSGL. The segment covering 466–476 has biased composition (low complexity); sequence SPTLSGSGSGL.

As to quaternary structure, interacts with cip1 and cip2.

The protein localises to the cytoplasm. Its function is as follows. Regulates global gene expression after oxidative stress. Interacts and stabilizes atf1 and pcr1 mRNAs after oxidative stress, thus controlling their turnover. The protein is RNA-binding post-transcriptional regulator csx1 (csx1) of Schizosaccharomyces pombe (strain 972 / ATCC 24843) (Fission yeast).